A 708-amino-acid polypeptide reads, in one-letter code: Polyribonucleotide nucleotidyltransferase (708 aa).

Mg(2+) is bound by residues D487 and D493. The 60-residue stretch at 554-613 folds into the KH domain; sequence PRIHTMKISADKIKDVIGKGGAVIRALTEETGTTIEIEDDGTIKIAATEGAAAKEAIRRI. Positions 623-691 constitute an S1 motif domain; sequence GVIYTGKVAR…RQGRVRLSMK (69 aa).

This sequence belongs to the polyribonucleotide nucleotidyltransferase family. Component of the RNA degradosome, which is a multiprotein complex involved in RNA processing and mRNA degradation. The cofactor is Mg(2+).

The protein localises to the cytoplasm. The catalysed reaction is RNA(n+1) + phosphate = RNA(n) + a ribonucleoside 5'-diphosphate. In terms of biological role, involved in mRNA degradation. Catalyzes the phosphorolysis of single-stranded polyribonucleotides processively in the 3'- to 5'-direction. The polypeptide is Polyribonucleotide nucleotidyltransferase (Vibrio vulnificus (strain CMCP6)).